We begin with the raw amino-acid sequence, 241 residues long: MVKDTLFSTPIAKLGDFIFDENVAEVFPDMIQRSVPGYSNIITAIGMLAERFVTADSNVYDLGCSRGAATLSARRNIHQPNVKIIGIDNSQPMVERCRQHIAAYHSEVPVEILCDDIRHVEIKNASMVILNFTLQFLPPEDRVALLTKIYEGLNPNGVLVLSEKFRFEDTKIDHLLIDLHHQFKRANGYSELEVSQKRTALENVMRTDSIETHKVRLKNVGFSQVELWFQCFNFGSMIAVK.

S-adenosyl-L-methionine-binding positions include tyrosine 38, 63–65, 88–89, 116–117, asparagine 131, and arginine 198; these read GCS, DN, and DI.

It belongs to the class I-like SAM-binding methyltransferase superfamily. Cx-SAM synthase family. As to quaternary structure, homodimer.

It carries out the reaction prephenate + S-adenosyl-L-methionine = carboxy-S-adenosyl-L-methionine + 3-phenylpyruvate + H2O. Functionally, catalyzes the conversion of S-adenosyl-L-methionine (SAM) to carboxy-S-adenosyl-L-methionine (Cx-SAM). This Haemophilus influenzae (strain 86-028NP) protein is Carboxy-S-adenosyl-L-methionine synthase.